Reading from the N-terminus, the 635-residue chain is Extracellular metalloproteinase 1 (635 aa).

The first 19 residues, 1-19, serve as a signal peptide directing secretion; that stretch reads MHGLLLAAGLLSLPLHVLA. Residues 20–246 constitute a propeptide that is removed on maturation; the sequence is HPQPSTSTSL…VHNVVDYVAH (227 aa). Asn287 carries an N-linked (GlcNAc...) asparagine glycan. Residue His430 participates in Zn(2+) binding. Residue Glu431 is part of the active site. His434 is a Zn(2+) binding site. N-linked (GlcNAc...) asparagine glycosylation is found at Asn475, Asn594, and Asn623.

Belongs to the peptidase M36 family. It depends on Zn(2+) as a cofactor.

It is found in the secreted. Its function is as follows. Secreted metalloproteinase probably acting as a virulence factor. In Arthroderma benhamiae (Trichophyton mentagrophytes), this protein is Extracellular metalloproteinase 1 (MEP1).